The chain runs to 240 residues: Probable transcriptional regulatory protein Adeh_2184 (240 aa).

It belongs to the TACO1 family.

It localises to the cytoplasm. The protein is Probable transcriptional regulatory protein Adeh_2184 of Anaeromyxobacter dehalogenans (strain 2CP-C).